We begin with the raw amino-acid sequence, 79 residues long: Submaxillary gland androgen-regulated protein 3B (79 aa).

The N-terminal stretch at 1-22 is a signal peptide; it reads MKSLTWILGLWALAACFTPGES. A disordered region spans residues 19 to 79; sequence PGESQRGPRG…GIFPPPPPQP (61 aa). Gln-23 is subject to Pyrrolidone carboxylic acid. The segment covering 28–79 has biased composition (pro residues); it reads GPYPPGPLAPPQPFGPGFVPPPPPPPYGPGRIPPPPPAPYGPGIFPPPPPQP.

Belongs to the PROL1/PROL3 family. In terms of processing, P-A and D1A are probably degradation products of P-B. Secreted into saliva by submaxillary gland. Not expressed in heart, brain, lung, liver, skeletal muscle, Kidney, pancreas or placenta.

Its subcellular location is the secreted. The chain is Submaxillary gland androgen-regulated protein 3B (SMR3B) from Homo sapiens (Human).